The sequence spans 307 residues: Plastid division protein PDV2 (307 aa).

The residue at position 1 (methionine 1) is an N-acetylmethionine. Residues 1–213 are Cytoplasmic-facing; that stretch reads MEDEEGIGLI…SGGSSHGVIR (213 aa). The disordered stretch occupies residues 28–66; the sequence is SSTTVSDNGDGNEDLSPGEGRKSEIIGNQDKDFDSISSE. A compositionally biased stretch (basic and acidic residues) spans 46-61; that stretch reads EGRKSEIIGNQDKDFD. Serine 50 carries the post-translational modification Phosphoserine. Positions 76–103 form a coiled coil; it reads LLRIRDALEALESQLASLQNLRQRQQYE. A disordered region spans residues 174 to 206; sequence HLPSKKKSDANGFGSGHVRNEAEAKSPNGGSGG. Residues 214–234 traverse the membrane as a helical segment; it reads FLGSVAKIVLPIIGVISLLSA. At 235 to 307 the chain is on the chloroplast intermembrane side; that stretch reads SGYGPEMRKR…AKRDVTYGYG (73 aa). Residues 235 to 307 are ARC6 binding; the sequence is SGYGPEMRKR…AKRDVTYGYG (73 aa).

Interacts (via C-terminus) with ARC6 (via C-terminus) in the chloroplast intermembrane space; this interaction induces ARC6 homodimerization and leads to the formation of a heterotetramer containing two ARC6 and two PDV2 subunits. Interacts with ARC5/DRP5B. In terms of tissue distribution, mostly expressed in young leaves.

It is found in the plastid. The protein localises to the chloroplast outer membrane. Its function is as follows. Component of the plastid division machinery consisting in a binary fission accomplished by the simultaneous constriction of the FtsZ ring on the stromal side of the inner envelope membrane, and the ARC5/DRP5B ring on the cytosolic side of the outer envelope membrane. Positive factor of chloroplast division required, with a dosage effect, to mediate the recruitment and dimerization of ARC5/DRP5B at the midplastid constriction site in the cytoplasm at plastid outer envelope membranes (OEMs). Prevents ARC5/DRP5B GTPase acrivity. Relays plastid division site position between stroma and outer surface via interactions with the cytoplasmic ARC5/DRP5B and the inner membrane ARC6 that recruits stromal FtsZ ring. Binding to phosphatidylinositol 4-phosphate (PI4P) modulates negatively chloroplast division. This Arabidopsis thaliana (Mouse-ear cress) protein is Plastid division protein PDV2.